A 260-amino-acid chain; its full sequence is Chloride intracellular channel Clic (260 aa).

Residues 42–66 (FCQEYFMDLYLLAELKTISLKVTTV) traverse the membrane as a helical segment.

It belongs to the chloride channel CLIC family. In terms of tissue distribution, expressed in cardiac tubes.

Its subcellular location is the mitochondrion. The protein localises to the membrane. Might insert into membranes and form chloride ion channels. Channel activity depends on the pH. May play a role in ethanol sensitivity. The protein is Chloride intracellular channel Clic of Drosophila melanogaster (Fruit fly).